The chain runs to 247 residues: Carboxy-S-adenosyl-L-methionine synthase (247 aa).

S-adenosyl-L-methionine-binding positions include Tyr39, 64–66, 89–90, 117–118, Asn132, and Arg199; these read GCS, DN, and DI.

The protein belongs to the class I-like SAM-binding methyltransferase superfamily. Cx-SAM synthase family. As to quaternary structure, homodimer.

It carries out the reaction prephenate + S-adenosyl-L-methionine = carboxy-S-adenosyl-L-methionine + 3-phenylpyruvate + H2O. Its function is as follows. Catalyzes the conversion of S-adenosyl-L-methionine (SAM) to carboxy-S-adenosyl-L-methionine (Cx-SAM). This Klebsiella pneumoniae (strain 342) protein is Carboxy-S-adenosyl-L-methionine synthase.